The chain runs to 67 residues: Beta-defensin 36 (67 aa).

The signal sequence occupies residues 1 to 22 (MKLLLLTLAALLLVSQLTPGDA). Cystine bridges form between cysteine 25/cysteine 52, cysteine 32/cysteine 46, and cysteine 36/cysteine 53.

This sequence belongs to the beta-defensin family.

The protein resides in the secreted. Its function is as follows. Has antibacterial activity. This is Beta-defensin 36 (Defb36) from Mus musculus (Mouse).